A 98-amino-acid chain; its full sequence is Small ribosomal subunit protein uS19 (98 aa).

The protein belongs to the universal ribosomal protein uS19 family.

Protein S19 forms a complex with S13 that binds strongly to the 16S ribosomal RNA. This Chlorobaculum parvum (strain DSM 263 / NCIMB 8327) (Chlorobium vibrioforme subsp. thiosulfatophilum) protein is Small ribosomal subunit protein uS19.